The sequence spans 809 residues: 3',5'-cyclic-AMP phosphodiesterase 4D (809 aa).

The interval Met-1–Arg-107 is disordered. Phosphoserine is present on residues His-54, Pro-59, and Pro-63. Over residues Pro-58–Gly-89 the composition is skewed to pro residues. Residues Ala-90–Gly-102 show a composition bias toward low complexity. A phosphoserine mark is found at Ser-142, Ser-299, Ser-301, Ser-348, and Ser-375. The interval Glu-343–Ile-364 is disordered. Residues Val-386 to Ser-715 form the PDEase domain. A Glycyl lysine isopeptide (Lys-Gly) (interchain with G-Cter in SUMO) cross-link involves residue Lys-387. The active-site Proton donor is His-462. His-462 contacts 3',5'-cyclic AMP. His-462 contacts AMP. Zn(2+) contacts are provided by His-466, His-502, Asp-503, and Asp-620. AMP contacts are provided by Asp-503, Asp-620, Asn-623, Gln-671, and Phe-674. Asp-503 contacts Mg(2+). Asp-503 is a binding site for Mn(2+). 2 residues coordinate 3',5'-cyclic AMP: Gln-671 and Phe-674. 2 disordered regions span residues Ser-710–Gly-729 and Thr-739–Thr-809. The segment covering Cys-762–Ser-773 has biased composition (polar residues). The segment covering Pro-779–Gln-796 has biased composition (acidic residues).

It belongs to the cyclic nucleotide phosphodiesterase family. PDE4 subfamily. As to quaternary structure, homodimer for the long isoforms. Isoforms with truncated N-termini are monomeric. Isoform 3 is part of a ternary complex containing PRKAR2A, PRKAR2B and AKAP9. Interacts with PDE4DIP. Identified in a complex composed of RYR1, PDE4D, PKA, FKBP1A and protein phosphatase 1 (PP1). Isoform 5, isoform N3 and isoform 12 bind RACK1 via their unique N-terminus. Binds ARRB2. Interacts (via N-terminal region) with SHANK2 (via proline-rich region); the interaction is increased in a PKA-dependent manner. Zn(2+) serves as cofactor. Requires Mg(2+) as cofactor. Mn(2+) is required as a cofactor. In terms of processing, long isoforms that share a conserved PKA phosphorylation site in the N-terminus are activated by PKA through phosphorylation. Isoform 3 and isoform 7 are activated by phosphorylation (in vitro), but not isoform 6. Isoform N3 and isoform 12 are phosphorylated on Ser-49, Ser-51, Ser-55 and Ser-59. Post-translationally, sumoylation of long isoforms by PIAS4 augments their activation by PKA phosphorylation and represses their inhibition by ERK phosphorylation. In terms of tissue distribution, expressed in colonic epithelial cells (at protein level). Widespread; most abundant in skeletal muscle. As to expression, detected in brain. Detected in brain, placenta, lung and kidney. In terms of tissue distribution, detected in heart and skeletal muscle.

The protein resides in the apical cell membrane. It localises to the cytoplasm. It is found in the membrane. Its subcellular location is the cytoskeleton. The protein localises to the microtubule organizing center. The protein resides in the centrosome. The catalysed reaction is 3',5'-cyclic AMP + H2O = AMP + H(+). It functions in the pathway purine metabolism; 3',5'-cyclic AMP degradation; AMP from 3',5'-cyclic AMP: step 1/1. Inhibited by rolipram. Activated by phosphatidic acid. Functionally, hydrolyzes the second messenger cAMP, which is a key regulator of many important physiological processes. This chain is 3',5'-cyclic-AMP phosphodiesterase 4D, found in Homo sapiens (Human).